The sequence spans 310 residues: GPN-loop GTPase 2 (310 aa).

Position 2 is an N-acetylalanine (Ala-2). GTP is bound at residue 19 to 24 (GSGKTT). The short motif at 76–78 (GPN) is the Gly-Pro-Asn (GPN)-loop; involved in dimer interface element. GTP is bound at residue 178–181 (SKMD).

It belongs to the GPN-loop GTPase family. As to quaternary structure, heterodimers with GPN1 or GPN3. Binds to RNA polymerase II (RNAPII).

In terms of biological role, small GTPase required for proper localization of RNA polymerase II and III (RNAPII and RNAPIII). May act at an RNAP assembly step prior to nuclear import. This is GPN-loop GTPase 2 from Rattus norvegicus (Rat).